Here is a 717-residue protein sequence, read N- to C-terminus: Coupling protein TraD (717 aa).

The Cytoplasmic segment spans residues 1-27 (MSFNAKDMTQGGQIASMRIRMFSQIAN). Residues 28-47 (IMLYCLFIFFWILVGLVLWI) traverse the membrane as a helical segment. The Periplasmic portion of the chain corresponds to 48–104 (KISWQTFVNGCIYWWCTTLEGMRDLIKSQPVYEIQYYGKTFRMNAAQVLHDKYMIWC). The helical transmembrane segment at 105–130 (SEQLWSAFVLAAVVALVICLITFFVV) threads the bilayer. Over 131-717 (SWILGRQGKQ…GEDVEPGDDF (587 aa)) the chain is Cytoplasmic. 192-199 (GTVGAGKS) provides a ligand contact to ATP. Disordered stretches follow at residues 614 to 639 (EDVTQAEQPQQPVSPAINDKKSDSGV) and 650 to 669 (LKMKPEEEMEQQLPPGISES).

This sequence belongs to the TrwB coupling protein family. Interacts with relaxosome component TraM. May form a hexamer in the membrane.

It localises to the cell inner membrane. Its function is as follows. Conjugative DNA transfer (CDT) is the unidirectional transfer of ssDNA plasmid from a donor to a recipient cell. It is the central mechanism by which antibiotic resistance and virulence factors are propagated in bacterial populations. Couples the transferosome to a type IV secretion system. Probably forms a pore through which single-stranded plasmid DNA is transferred to the secretion system. The last 37 residues are important for determining plasmid specificity and transfer efficiency, with additional specificity conferred by the TraD-TraM pair. This Escherichia coli (strain K12) protein is Coupling protein TraD (traD).